A 236-amino-acid chain; its full sequence is 1-(5-phosphoribosyl)-5-[(5-phosphoribosylamino)methylideneamino] imidazole-4-carboxamide isomerase (236 aa).

The active-site Proton acceptor is the Asp-8. Asp-127 functions as the Proton donor in the catalytic mechanism.

It belongs to the HisA/HisF family.

The protein resides in the cytoplasm. It carries out the reaction 1-(5-phospho-beta-D-ribosyl)-5-[(5-phospho-beta-D-ribosylamino)methylideneamino]imidazole-4-carboxamide = 5-[(5-phospho-1-deoxy-D-ribulos-1-ylimino)methylamino]-1-(5-phospho-beta-D-ribosyl)imidazole-4-carboxamide. The protein operates within amino-acid biosynthesis; L-histidine biosynthesis; L-histidine from 5-phospho-alpha-D-ribose 1-diphosphate: step 4/9. In Campylobacter fetus subsp. fetus (strain 82-40), this protein is 1-(5-phosphoribosyl)-5-[(5-phosphoribosylamino)methylideneamino] imidazole-4-carboxamide isomerase.